The following is a 161-amino-acid chain: ATP synthase subunit b 1 (161 aa).

The helical transmembrane segment at 5-25 (PETWVAIAFLLLMGVFAYVGV) threads the bilayer.

The protein belongs to the ATPase B chain family. In terms of assembly, F-type ATPases have 2 components, F(1) - the catalytic core - and F(0) - the membrane proton channel. F(1) has five subunits: alpha(3), beta(3), gamma(1), delta(1), epsilon(1). F(0) has three main subunits: a(1), b(2) and c(10-14). The alpha and beta chains form an alternating ring which encloses part of the gamma chain. F(1) is attached to F(0) by a central stalk formed by the gamma and epsilon chains, while a peripheral stalk is formed by the delta and b chains.

Its subcellular location is the cell inner membrane. Functionally, f(1)F(0) ATP synthase produces ATP from ADP in the presence of a proton or sodium gradient. F-type ATPases consist of two structural domains, F(1) containing the extramembraneous catalytic core and F(0) containing the membrane proton channel, linked together by a central stalk and a peripheral stalk. During catalysis, ATP synthesis in the catalytic domain of F(1) is coupled via a rotary mechanism of the central stalk subunits to proton translocation. Component of the F(0) channel, it forms part of the peripheral stalk, linking F(1) to F(0). In Nitrobacter winogradskyi (strain ATCC 25391 / DSM 10237 / CIP 104748 / NCIMB 11846 / Nb-255), this protein is ATP synthase subunit b 1.